The primary structure comprises 174 residues: UPF0113 protein APE_0516.1 (174 aa).

Belongs to the UPF0113 family.

The sequence is that of UPF0113 protein APE_0516.1 from Aeropyrum pernix (strain ATCC 700893 / DSM 11879 / JCM 9820 / NBRC 100138 / K1).